The primary structure comprises 150 residues: Large ribosomal subunit protein bL9 (150 aa).

It belongs to the bacterial ribosomal protein bL9 family.

Its function is as follows. Binds to the 23S rRNA. The polypeptide is Large ribosomal subunit protein bL9 (Leuconostoc citreum (strain KM20)).